Consider the following 442-residue polypeptide: Ribosomal protein uS12 methylthiotransferase RimO (442 aa).

The MTTase N-terminal domain maps to 9–119 (PRIGFVSLGC…VLSHVHQYVP (111 aa)). 6 residues coordinate [4Fe-4S] cluster: cysteine 18, cysteine 54, cysteine 83, cysteine 151, cysteine 155, and cysteine 158. Residues 137–375 (LTPRHYAYLK…QLQQAISTQR (239 aa)) enclose the Radical SAM core domain. Positions 377 to 442 (QDKIGREVLV…DEYDLWGSRV (66 aa)) constitute a TRAM domain.

Belongs to the methylthiotransferase family. RimO subfamily. [4Fe-4S] cluster serves as cofactor.

It localises to the cytoplasm. The enzyme catalyses L-aspartate(89)-[ribosomal protein uS12]-hydrogen + (sulfur carrier)-SH + AH2 + 2 S-adenosyl-L-methionine = 3-methylsulfanyl-L-aspartate(89)-[ribosomal protein uS12]-hydrogen + (sulfur carrier)-H + 5'-deoxyadenosine + L-methionine + A + S-adenosyl-L-homocysteine + 2 H(+). Its function is as follows. Catalyzes the methylthiolation of an aspartic acid residue of ribosomal protein uS12. This Pectobacterium atrosepticum (strain SCRI 1043 / ATCC BAA-672) (Erwinia carotovora subsp. atroseptica) protein is Ribosomal protein uS12 methylthiotransferase RimO.